Here is a 376-residue protein sequence, read N- to C-terminus: Homoserine dehydrogenase (376 aa).

NADP(+) is bound by residues asparagine 17 and isoleucine 18. Isoleucine 18 is a binding site for NAD(+). Positions 18, 67, 99, and 123 each coordinate NADPH. NADP(+)-binding residues include threonine 99 and lysine 123. Threonine 99 contributes to the NAD(+) binding site. Glutamate 150, valine 153, alanine 155, and leucine 157 together coordinate Na(+). Serine 201 is modified (phosphoserine). Residues glycine 213 and glutamate 216 each contribute to the NADP(+) site. L-homoserine contacts are provided by glutamate 216 and aspartate 227. The active-site Proton donor is the lysine 231. Glycine 349 provides a ligand contact to NADP(+). Glycine 349 is an NAD(+) binding site. Glycine 349 is an NADPH binding site.

The protein belongs to the homoserine dehydrogenase family. Requires a metal cation as cofactor.

The catalysed reaction is L-homoserine + NADP(+) = L-aspartate 4-semialdehyde + NADPH + H(+). It catalyses the reaction L-homoserine + NAD(+) = L-aspartate 4-semialdehyde + NADH + H(+). It participates in amino-acid biosynthesis; L-methionine biosynthesis via de novo pathway; L-homoserine from L-aspartate: step 3/3. The protein operates within amino-acid biosynthesis; L-threonine biosynthesis; L-threonine from L-aspartate: step 3/5. Its function is as follows. Catalyzes the conversion of L-aspartate-beta-semialdehyde (L-Asa) to L-homoserine (L-Hse), the third step in the biosynthesis of amino acids that derive from aspartate (the aspartate family of amino acids), including methioinine and threonine, the latter of which is a precursor to isoleucine; production of homoserine leads to a branch-point in the pathway as it can either be O-phosphorylated for processing to threonine, or O-acylated for processing to methionine. The sequence is that of Homoserine dehydrogenase from Schizosaccharomyces pombe (strain 972 / ATCC 24843) (Fission yeast).